Reading from the N-terminus, the 500-residue chain is Lariat debranching enzyme (500 aa).

The segment at 1-25 is disordered; the sequence is MSSKNPVDEQPCCGSHEGSHQDPAP. The a divalent metal cation site is built by Cys48, His50, Asp79, and Asn124. The lariat recognition loop stretch occupies residues 164-194; it reads SGIFSQGDFQFSHYERPSFSERDVKSAYHVR. His222, His274, and His276 together coordinate a divalent metal cation. The interval 453 to 500 is disordered; that stretch reads DDANAKPNQDDVDFGDEDFVIDRGHTSDEPEAKKSRLDEDKFEAVPSE. Residues 462 to 471 show a composition bias toward acidic residues; it reads DDVDFGDEDF. Residues 472 to 500 show a composition bias toward basic and acidic residues; that stretch reads VIDRGHTSDEPEAKKSRLDEDKFEAVPSE.

It belongs to the lariat debranching enzyme family. The cofactor is Fe(2+). Zn(2+) is required as a cofactor. Mn(2+) serves as cofactor.

The protein localises to the nucleus. With respect to regulation, active in presence of diverse metals including Fe(2+), Zn(2+), Mn(2+). Binds two metal cations in two adjacent alpha and beta metal-binding pockets. In terms of biological role, cleaves the 2'-5' phosphodiester linkage at the branch point of lariat intron pre-mRNAs after splicing and converts them into linear molecules that are subsequently degraded. It thereby facilitates ribonucleotide turnover. The chain is Lariat debranching enzyme from Caenorhabditis elegans.